The chain runs to 503 residues: Cytochrome P450 3A12 (503 aa).

Position 442 (Cys442) interacts with heme.

This sequence belongs to the cytochrome P450 family. It depends on heme as a cofactor.

It localises to the endoplasmic reticulum membrane. Its subcellular location is the microsome membrane. The enzyme catalyses an organic molecule + reduced [NADPH--hemoprotein reductase] + O2 = an alcohol + oxidized [NADPH--hemoprotein reductase] + H2O + H(+). Cytochromes P450 are a group of heme-thiolate monooxygenases. In liver microsomes, this enzyme is involved in an NADPH-dependent electron transport pathway. It oxidizes a variety of structurally unrelated compounds, including steroids, fatty acids, and xenobiotics. The chain is Cytochrome P450 3A12 (CYP3A12) from Canis lupus familiaris (Dog).